The sequence spans 329 residues: L-carnitine dehydrogenase (329 aa).

19–24 (GAGVIG) serves as a coordination point for NAD(+).

The protein belongs to the 3-hydroxyacyl-CoA dehydrogenase family. L-carnitine dehydrogenase subfamily. Homodimer.

It localises to the cytoplasm. It carries out the reaction carnitine + NAD(+) = 3-dehydrocarnitine + NADH + H(+). It functions in the pathway amine and polyamine metabolism; carnitine metabolism. Catalyzes the NAD(+)-dependent oxidation of L-carnitine to 3-dehydrocarnitine. This chain is L-carnitine dehydrogenase, found in Nocardiopsis dassonvillei (strain ATCC 23218 / DSM 43111 / CIP 107115 / JCM 7437 / KCTC 9190 / NBRC 14626 / NCTC 10488 / NRRL B-5397 / IMRU 509) (Actinomadura dassonvillei).